The primary structure comprises 188 residues: Peptidyl-tRNA hydrolase (188 aa).

Residue Tyr-16 participates in tRNA binding. The active-site Proton acceptor is the His-21. 3 residues coordinate tRNA: Phe-66, Asn-68, and Asn-114.

The protein belongs to the PTH family. As to quaternary structure, monomer.

The protein localises to the cytoplasm. It catalyses the reaction an N-acyl-L-alpha-aminoacyl-tRNA + H2O = an N-acyl-L-amino acid + a tRNA + H(+). Its function is as follows. Hydrolyzes ribosome-free peptidyl-tRNAs (with 1 or more amino acids incorporated), which drop off the ribosome during protein synthesis, or as a result of ribosome stalling. In terms of biological role, catalyzes the release of premature peptidyl moieties from peptidyl-tRNA molecules trapped in stalled 50S ribosomal subunits, and thus maintains levels of free tRNAs and 50S ribosomes. The protein is Peptidyl-tRNA hydrolase of Citrifermentans bemidjiense (strain ATCC BAA-1014 / DSM 16622 / JCM 12645 / Bem) (Geobacter bemidjiensis).